We begin with the raw amino-acid sequence, 306 residues long: Pantothenate kinase (306 aa).

90–97 (GSVAVGKS) serves as a coordination point for ATP.

This sequence belongs to the prokaryotic pantothenate kinase family.

Its subcellular location is the cytoplasm. It carries out the reaction (R)-pantothenate + ATP = (R)-4'-phosphopantothenate + ADP + H(+). Its pathway is cofactor biosynthesis; coenzyme A biosynthesis; CoA from (R)-pantothenate: step 1/5. This chain is Pantothenate kinase, found in Listeria welshimeri serovar 6b (strain ATCC 35897 / DSM 20650 / CCUG 15529 / CIP 8149 / NCTC 11857 / SLCC 5334 / V8).